A 144-amino-acid polypeptide reads, in one-letter code: uncharacterized protein (144 aa).

A coiled-coil region spans residues 48-119 (ELNKLKAKAD…KETEEPKMEL (72 aa)).

This is an uncharacterized protein from Archaeoglobus fulgidus (strain ATCC 49558 / DSM 4304 / JCM 9628 / NBRC 100126 / VC-16).